A 323-amino-acid polypeptide reads, in one-letter code: Ubiquinone biosynthesis protein COQ4, mitochondrial (323 aa).

The transit peptide at 1-29 (MLKSTVSNTRIKCCRIDQRRNYLFTALAS) directs the protein to the mitochondrion. Zn(2+) is bound by residues H205, D206, H209, and E221.

It belongs to the COQ4 family. In terms of assembly, component of a multi-subunit COQ enzyme complex, composed of at least COQ3, COQ4, COQ5, COQ6, COQ7 and COQ9. Zn(2+) is required as a cofactor.

Its subcellular location is the mitochondrion inner membrane. It catalyses the reaction a 4-hydroxy-3-methoxy-5-(all-trans-polyprenyl)benzoate + H(+) = a 2-methoxy-6-(all-trans-polyprenyl)phenol + CO2. It participates in cofactor biosynthesis; ubiquinone biosynthesis. Its function is as follows. Lyase that catalyzes the C1-decarboxylation of 4-hydroxy-3-methoxy-5-(all-trans-polyprenyl)benzoic acid into 2-methoxy-6-(all-trans-polyprenyl)phenol during ubiquinone biosynthesis. The chain is Ubiquinone biosynthesis protein COQ4, mitochondrial from Candida dubliniensis (strain CD36 / ATCC MYA-646 / CBS 7987 / NCPF 3949 / NRRL Y-17841) (Yeast).